A 229-amino-acid polypeptide reads, in one-letter code: Deoxyribose-phosphate aldolase (229 aa).

Residue Asp84 is the Proton donor/acceptor of the active site. Lys146 acts as the Schiff-base intermediate with acetaldehyde in catalysis. Lys188 (proton donor/acceptor) is an active-site residue.

Belongs to the DeoC/FbaB aldolase family. DeoC type 1 subfamily.

The protein localises to the cytoplasm. It catalyses the reaction 2-deoxy-D-ribose 5-phosphate = D-glyceraldehyde 3-phosphate + acetaldehyde. It functions in the pathway carbohydrate degradation; 2-deoxy-D-ribose 1-phosphate degradation; D-glyceraldehyde 3-phosphate and acetaldehyde from 2-deoxy-alpha-D-ribose 1-phosphate: step 2/2. Functionally, catalyzes a reversible aldol reaction between acetaldehyde and D-glyceraldehyde 3-phosphate to generate 2-deoxy-D-ribose 5-phosphate. The protein is Deoxyribose-phosphate aldolase of Pyrobaculum neutrophilum (strain DSM 2338 / JCM 9278 / NBRC 100436 / V24Sta) (Thermoproteus neutrophilus).